Here is a 346-residue protein sequence, read N- to C-terminus: Biotin synthase (346 aa).

Residues 38-256 (RQVQVSTLLS…IAVARIMMPT (219 aa)) form the Radical SAM core domain. 3 residues coordinate [4Fe-4S] cluster: cysteine 53, cysteine 57, and cysteine 60. Residues cysteine 97, cysteine 128, cysteine 188, and arginine 260 each coordinate [2Fe-2S] cluster.

The protein belongs to the radical SAM superfamily. Biotin synthase family. As to quaternary structure, homodimer. Requires [4Fe-4S] cluster as cofactor. [2Fe-2S] cluster serves as cofactor.

The enzyme catalyses (4R,5S)-dethiobiotin + (sulfur carrier)-SH + 2 reduced [2Fe-2S]-[ferredoxin] + 2 S-adenosyl-L-methionine = (sulfur carrier)-H + biotin + 2 5'-deoxyadenosine + 2 L-methionine + 2 oxidized [2Fe-2S]-[ferredoxin]. Its pathway is cofactor biosynthesis; biotin biosynthesis; biotin from 7,8-diaminononanoate: step 2/2. In terms of biological role, catalyzes the conversion of dethiobiotin (DTB) to biotin by the insertion of a sulfur atom into dethiobiotin via a radical-based mechanism. This is Biotin synthase from Cronobacter sakazakii (strain ATCC BAA-894) (Enterobacter sakazakii).